Consider the following 146-residue polypeptide: MNFEAISLEMSLMWLHKNNKLMGFLNQEAPEVNIFDQFLFEDRDKKMLKEDDEFCDPPAQTFNEPAPSTSKITDVDIEFYNSMAEEFDSPMDEEEETKPREASLDQTAPKKSKKEELLVKNNNFSTNNVKKLQFKKSVRLRSKRRS.

Residues 86 to 96 (EFDSPMDEEEE) are compositionally biased toward acidic residues. The interval 86-124 (EFDSPMDEEEETKPREASLDQTAPKKSKKEELLVKNNNF) is disordered.

This is an uncharacterized protein from Ostreid herpesvirus 1 (isolate France) (OsHV-1).